The following is a 191-amino-acid chain: Protein YceI (191 aa).

A signal peptide spans 1–22 (MKKNLLGFTFASLLFTTGSAVA).

It belongs to the UPF0312 family. Type 1 subfamily.

The protein localises to the periplasm. The sequence is that of Protein YceI from Salmonella agona (strain SL483).